The primary structure comprises 379 residues: Leukocyte elastase inhibitor (379 aa).

Met1 bears the N-acetylmethionine mark. N6-acetyllysine occurs at positions 137 and 177. Ser300 carries the phosphoserine modification. The segment at 351 to 379 is CARD-binding motif (CBM); that stretch reads NFTADHPFLFFIRHNSSGSILFLGRFSSP.

It belongs to the serpin family. Ov-serpin subfamily. As to quaternary structure, monomer. Interacts (via C-terminus) with CASP1; CASP4 (via CARD domain) and CASP5; these interactions regulate the activity of inflammatory caspases. Interacts with PRTN3. Interacts with GZMH. In terms of tissue distribution, in human bone marrow, present in all CD45+ populations. Expression levels are highest in the neutrophil lineage, intermediate in monocytic, and lowest in lymphocytic lineage. Within the neutrophil lineage, expression is highest in promyelocytes.

It is found in the secreted. The protein resides in the cytoplasm. Its subcellular location is the cytolytic granule. The protein localises to the early endosome. In terms of biological role, neutrophil serine protease inhibitor that plays an essential role in the regulation of the innate immune response, inflammation and cellular homeostasis. Acts primarily to protect the cell from proteases released in the cytoplasm during stress or infection. These proteases are important in killing microbes but when released from granules, these potent enzymes also destroy host proteins and contribute to mortality. Regulates the activity of the neutrophil proteases elastase, cathepsin G, proteinase-3, chymase, chymotrypsin, and kallikrein-3. Also acts as a potent intracellular inhibitor of GZMH by directly blocking its proteolytic activity. During inflammation, limits the activity of inflammatory caspases CASP1, CASP4 and CASP5 by suppressing their caspase-recruitment domain (CARD) oligomerization and enzymatic activation. When secreted, promotes the proliferation of beta-cells via its protease inhibitory function. The sequence is that of Leukocyte elastase inhibitor (SERPINB1) from Homo sapiens (Human).